The following is a 110-amino-acid chain: Phosphoribosyl-AMP cyclohydrolase (110 aa).

Position 80 (aspartate 80) interacts with Mg(2+). Residue cysteine 81 participates in Zn(2+) binding. Mg(2+) is bound by residues aspartate 82 and aspartate 84. Zn(2+)-binding residues include cysteine 97 and cysteine 104.

Belongs to the PRA-CH family. As to quaternary structure, homodimer. The cofactor is Mg(2+). Zn(2+) is required as a cofactor.

Its subcellular location is the cytoplasm. The catalysed reaction is 1-(5-phospho-beta-D-ribosyl)-5'-AMP + H2O = 1-(5-phospho-beta-D-ribosyl)-5-[(5-phospho-beta-D-ribosylamino)methylideneamino]imidazole-4-carboxamide. Its pathway is amino-acid biosynthesis; L-histidine biosynthesis; L-histidine from 5-phospho-alpha-D-ribose 1-diphosphate: step 3/9. Functionally, catalyzes the hydrolysis of the adenine ring of phosphoribosyl-AMP. The sequence is that of Phosphoribosyl-AMP cyclohydrolase from Clostridium botulinum (strain Kyoto / Type A2).